The chain runs to 512 residues: Immunoglobulin delta heavy chain (512 aa).

Ig-like domains lie at 1-97 and 135-227; these read RLQL…MYYC and PDVF…KEIF. Residues 1-129 form a variable (V) domain, involved in antigen recognition region; sequence RLQLQESGPG…GQGTTVHVSS (129 aa). 2 cysteine pairs are disulfide-bonded: Cys22/Cys97 and Cys157/Cys213. Residues 130-512 form a constant (C) domain region; the sequence is APTKAPDVFP…VSYVTDHGPM (383 aa). Residues 225 to 296 form a disordered region; sequence EIFRWPESPK…TPECPSHTQP (72 aa). The span at 235 to 247 shows a compositional bias: polar residues; sequence AQASSVPTAQPQA. Ser238 is a glycosylation site (O-linked (GalNAc...) serine). Thr255, Thr256, Thr260, and Thr261 each carry an O-linked (GalNAc...) threonine glycan. The span at 267-287 shows a compositional bias: basic and acidic residues; sequence GGEEKKKEKEKEEQEERETKT. Ig-like domains lie at 304-392 and 396-502; these read PAVQ…RLMA and PAAQ…RSLE. Disulfide bonds link Cys319-Cys378 and Cys423-Cys484. N-linked (GlcNAc...) asparagine glycosylation is found at Asn354, Asn445, and Asn496.

Immunoglobulins are composed of two identical heavy chains and two identical light chains; disulfide-linked. An IgD molecule contains thus a delta heavy chain combined with either a kappa or a lambda light chains. Kappa light chains are found predominantly on the membrane IgD (mIgD) form and lambda on the secreted IgD (sIgD) form, this fact is poorly understood. Membrane-bound IgD molecules are non-covalently associated with a heterodimer of CD79A and CD79B.

The protein resides in the secreted. It localises to the cell membrane. Its function is as follows. Immunoglobulins, also known as antibodies, are membrane-bound or secreted glycoproteins produced by B lymphocytes. In the recognition phase of humoral immunity, the membrane-bound immunoglobulins serve as receptors which, upon binding of a specific antigen, trigger the clonal expansion and differentiation of B lymphocytes into immunoglobulins-secreting plasma cells. Secreted immunoglobulins mediate the effector phase of humoral immunity, which results in the elimination of bound antigens. The antigen binding site is formed by the variable domain of one heavy chain, together with that of its associated light chain. Thus, each immunoglobulin has two antigen binding sites with remarkable affinity for a particular antigen. The variable domains are assembled by a process called V-(D)-J rearrangement and can then be subjected to somatic hypermutations which, after exposure to antigen and selection, allow affinity maturation for a particular antigen. IgD is the major antigen receptor isotype on the surface of most peripheral B cells, where it is coexpressed with IgM. The membrane-bound IgD (mIgD) induces the phosphorylation of CD79A and CD79B by the Src family of protein tyrosine kinases. Soluble IgD (sIgD) concentration in serum is below those of IgG, IgA, and IgM but much higher than that of IgE. IgM and IgD molecules present on B cells have identical V regions and antigen-binding sites. After the antigen binds to the B cell receptor, the secreted form sIgD is shut off. IgD is a potent inducer of TNF, IL1B, and IL1RN. IgD also induces release of IL6, IL10, and LIF from peripheral blood mononuclear cells. Monocytes seem to be the main producers of cytokines in vitro in the presence of IgD. The chain is Immunoglobulin delta heavy chain from Homo sapiens (Human).